A 966-amino-acid polypeptide reads, in one-letter code: Catenin alpha-2 (966 aa).

The segment covering 924 to 940 has biased composition (basic and acidic residues); the sequence is PEKKPLVKREKPEEYQT. The tract at residues 924 to 952 is disordered; sequence PEKKPLVKREKPEEYQTRVRRGSQKKHIS. Residues 941–951 show a composition bias toward basic residues; that stretch reads RVRRGSQKKHI.

Belongs to the vinculin/alpha-catenin family.

Its subcellular location is the cell membrane. The protein resides in the cytoplasm. The protein localises to the cytoskeleton. It is found in the cell junction. It localises to the adherens junction. Its subcellular location is the cell projection. The protein resides in the axon. The protein localises to the nucleus. Functionally, may function as a linker between cadherin adhesion receptors and the cytoskeleton to regulate cell-cell adhesion and differentiation in the nervous system. The sequence is that of Catenin alpha-2 (ctnna2) from Xenopus laevis (African clawed frog).